The following is a 346-amino-acid chain: Phosphoribosylformylglycinamidine cyclo-ligase (346 aa).

The protein belongs to the AIR synthase family.

Its subcellular location is the cytoplasm. It catalyses the reaction 2-formamido-N(1)-(5-O-phospho-beta-D-ribosyl)acetamidine + ATP = 5-amino-1-(5-phospho-beta-D-ribosyl)imidazole + ADP + phosphate + H(+). The protein operates within purine metabolism; IMP biosynthesis via de novo pathway; 5-amino-1-(5-phospho-D-ribosyl)imidazole from N(2)-formyl-N(1)-(5-phospho-D-ribosyl)glycinamide: step 2/2. This Bacillus cereus (strain B4264) protein is Phosphoribosylformylglycinamidine cyclo-ligase.